Here is a 312-residue protein sequence, read N- to C-terminus: Aspartate carbamoyltransferase catalytic subunit (312 aa).

Carbamoyl phosphate is bound by residues arginine 58 and threonine 59. Lysine 86 serves as a coordination point for L-aspartate. The carbamoyl phosphate site is built by arginine 108, histidine 136, and glutamine 139. The L-aspartate site is built by arginine 169 and arginine 223. Carbamoyl phosphate-binding residues include glycine 264 and proline 265.

The protein belongs to the aspartate/ornithine carbamoyltransferase superfamily. ATCase family. As to quaternary structure, heterododecamer (2C3:3R2) of six catalytic PyrB chains organized as two trimers (C3), and six regulatory PyrI chains organized as three dimers (R2).

It catalyses the reaction carbamoyl phosphate + L-aspartate = N-carbamoyl-L-aspartate + phosphate + H(+). Its pathway is pyrimidine metabolism; UMP biosynthesis via de novo pathway; (S)-dihydroorotate from bicarbonate: step 2/3. Its function is as follows. Catalyzes the condensation of carbamoyl phosphate and aspartate to form carbamoyl aspartate and inorganic phosphate, the committed step in the de novo pyrimidine nucleotide biosynthesis pathway. This Heliobacterium modesticaldum (strain ATCC 51547 / Ice1) protein is Aspartate carbamoyltransferase catalytic subunit.